A 518-amino-acid polypeptide reads, in one-letter code: Glucose-1-phosphate adenylyltransferase large subunit 2, cytosolic (518 aa).

The protein belongs to the bacterial/plant glucose-1-phosphate adenylyltransferase family. Heterotetramer composed of two small and two large subunits.

The protein resides in the cytoplasm. The protein localises to the cytosol. The enzyme catalyses alpha-D-glucose 1-phosphate + ATP + H(+) = ADP-alpha-D-glucose + diphosphate. It functions in the pathway glycan biosynthesis; starch biosynthesis. Its activity is regulated as follows. Activated by 3'phosphoglycerate, inhibited by orthophosphate. Allosteric regulation. Inhibited by inorganic phosphate (Pi). Functionally, involved in synthesis of starch. Catalyzes the synthesis of ADP-glucose, a molecule that serves as an activated glycosyl donor for alpha-1,4-glucan synthesis. Essential for starch synthesis in seed endosperm. Is essential for both catalytic and allosteric regulatory properties of the cytosolic heterotetramer enzyme. This chain is Glucose-1-phosphate adenylyltransferase large subunit 2, cytosolic, found in Oryza sativa subsp. japonica (Rice).